A 347-amino-acid chain; its full sequence is Bombesin receptor-activated protein C6orf89 homolog (347 aa).

The Cytoplasmic portion of the chain corresponds to 1–58 (MDLAANEISIYDKLSETVDLVRQTGHQCGMSEKAIEKFIRQLLEKNEPQRPPPQYPLL). The chain crosses the membrane as a helical span at residues 59–79 (IVVYKVLATLGLILLTAYFVI). The Extracellular portion of the chain corresponds to 80–347 (QPFSPLAPEP…ICDGTAFSEL (268 aa)).

Homodimer. Interacts with BRS3. Interacts (via N-terminus) with SIN3B. In terms of processing, glycosylated.

Its subcellular location is the golgi apparatus membrane. It is found in the cytoplasm. In terms of biological role, exhibits histone deacetylase (HDAC) enhancer properties. May play a role in cell cycle progression and wound repair of bronchial epithelial cells. The sequence is that of Bombesin receptor-activated protein C6orf89 homolog from Pongo abelii (Sumatran orangutan).